Reading from the N-terminus, the 401-residue chain is Imidazolonepropionase (401 aa).

The Fe(3+) site is built by His70 and His72. The Zn(2+) site is built by His70 and His72. 4-imidazolone-5-propanoate-binding residues include Arg79, Tyr142, and His175. Tyr142 provides a ligand contact to N-formimidoyl-L-glutamate. His240 contributes to the Fe(3+) binding site. His240 is a binding site for Zn(2+). Gln243 lines the 4-imidazolone-5-propanoate pocket. Fe(3+) is bound at residue Asp315. Asp315 is a binding site for Zn(2+). The N-formimidoyl-L-glutamate site is built by Asn317 and Gly319. Ser320 lines the 4-imidazolone-5-propanoate pocket.

Belongs to the metallo-dependent hydrolases superfamily. HutI family. Zn(2+) serves as cofactor. Requires Fe(3+) as cofactor.

The protein localises to the cytoplasm. The catalysed reaction is 4-imidazolone-5-propanoate + H2O = N-formimidoyl-L-glutamate. Its pathway is amino-acid degradation; L-histidine degradation into L-glutamate; N-formimidoyl-L-glutamate from L-histidine: step 3/3. Its function is as follows. Catalyzes the hydrolytic cleavage of the carbon-nitrogen bond in imidazolone-5-propanoate to yield N-formimidoyl-L-glutamate. It is the third step in the universal histidine degradation pathway. This chain is Imidazolonepropionase, found in Ruegeria pomeroyi (strain ATCC 700808 / DSM 15171 / DSS-3) (Silicibacter pomeroyi).